A 757-amino-acid polypeptide reads, in one-letter code: Transcription factor FBD3 (757 aa).

Positions 1–24 (MSSKRLSQNEQEKSPGTGPPTHKR) are disordered. The segment at residues 31–58 (CNACRMRKSRCDGHRPSCSSCLSLGVNC) is a DNA-binding region (zn(2)-C6 fungal-type). 2 disordered regions span residues 106–161 (GGTD…DANT) and 202–222 (VAPSASNQASGPGDGVTTDVP). Residues 111 to 120 (NNHHNNHDSP) show a composition bias toward basic and acidic residues. Over residues 125-135 (TIAQSITSSRP) the composition is skewed to polar residues.

Its subcellular location is the nucleus. Transcription factor; part of the Fusarium detoxification of benzoxazolinone cluster involved in the degradation of benzoxazolinones produced by the host plant. Maize, wheat, and rye produce the 2 benzoxazinone phytoanticipins 2,4-dihy-droxy-7-methoxy-1,4-benzoxazin-3-one (DIMBOA) and 2,4-dihydroxy-1,4-benzoxazin-3-one (DIBOA) that, due to their inherent instability once released, spontaneously degrade to the more stable corresponding benzoxazolinones, 6-methoxy-2-benzoxazolinone (MBOA) and 2-benzoxazolinone (BOA), respectively. FDB3 controls the transcription of the FDB gene cluster in response to 6-methoxy-2-benzoxazolinone (MBOA). This chain is Transcription factor FBD3, found in Fusarium pseudograminearum (strain CS3096) (Wheat and barley crown-rot fungus).